We begin with the raw amino-acid sequence, 359 residues long: Aminomethyltransferase (359 aa).

It belongs to the GcvT family. The glycine cleavage system is composed of four proteins: P, T, L and H.

It carries out the reaction N(6)-[(R)-S(8)-aminomethyldihydrolipoyl]-L-lysyl-[protein] + (6S)-5,6,7,8-tetrahydrofolate = N(6)-[(R)-dihydrolipoyl]-L-lysyl-[protein] + (6R)-5,10-methylene-5,6,7,8-tetrahydrofolate + NH4(+). In terms of biological role, the glycine cleavage system catalyzes the degradation of glycine. This chain is Aminomethyltransferase, found in Alcanivorax borkumensis (strain ATCC 700651 / DSM 11573 / NCIMB 13689 / SK2).